We begin with the raw amino-acid sequence, 666 residues long: tRNA 5-methylaminomethyl-2-thiouridine biosynthesis bifunctional protein MnmC (666 aa).

The segment at Met1–Glu253 is tRNA (mnm(5)s(2)U34)-methyltransferase. Residues Val283–Pro666 form an FAD-dependent cmnm(5)s(2)U34 oxidoreductase region.

It in the N-terminal section; belongs to the methyltransferase superfamily. tRNA (mnm(5)s(2)U34)-methyltransferase family. This sequence in the C-terminal section; belongs to the DAO family. Requires FAD as cofactor.

The protein resides in the cytoplasm. It carries out the reaction 5-aminomethyl-2-thiouridine(34) in tRNA + S-adenosyl-L-methionine = 5-methylaminomethyl-2-thiouridine(34) in tRNA + S-adenosyl-L-homocysteine + H(+). In terms of biological role, catalyzes the last two steps in the biosynthesis of 5-methylaminomethyl-2-thiouridine (mnm(5)s(2)U) at the wobble position (U34) in tRNA. Catalyzes the FAD-dependent demodification of cmnm(5)s(2)U34 to nm(5)s(2)U34, followed by the transfer of a methyl group from S-adenosyl-L-methionine to nm(5)s(2)U34, to form mnm(5)s(2)U34. The chain is tRNA 5-methylaminomethyl-2-thiouridine biosynthesis bifunctional protein MnmC from Legionella pneumophila subsp. pneumophila (strain Philadelphia 1 / ATCC 33152 / DSM 7513).